Consider the following 86-residue polypeptide: Translation initiation factor IF-1 2 (86 aa).

The S1-like domain occupies 1–72 (MAKEELLEME…TKARISFRHK (72 aa)).

Belongs to the IF-1 family. Component of the 30S ribosomal translation pre-initiation complex which assembles on the 30S ribosome in the order IF-2 and IF-3, IF-1 and N-formylmethionyl-tRNA(fMet); mRNA recruitment can occur at any time during PIC assembly.

Its subcellular location is the cytoplasm. Functionally, one of the essential components for the initiation of protein synthesis. Stabilizes the binding of IF-2 and IF-3 on the 30S subunit to which N-formylmethionyl-tRNA(fMet) subsequently binds. Helps modulate mRNA selection, yielding the 30S pre-initiation complex (PIC). Upon addition of the 50S ribosomal subunit IF-1, IF-2 and IF-3 are released leaving the mature 70S translation initiation complex. This chain is Translation initiation factor IF-1 2, found in Aromatoleum aromaticum (strain DSM 19018 / LMG 30748 / EbN1) (Azoarcus sp. (strain EbN1)).